The sequence spans 362 residues: tRNA-specific 2-thiouridylase MnmA (362 aa).

Residues 6-13 and leucine 32 each bind ATP; that span reads AMSGGVDS. Cysteine 101 (nucleophile) is an active-site residue. Cysteine 101 and cysteine 197 are disulfide-bonded. An ATP-binding site is contributed by glycine 125. The tract at residues 147-149 is interaction with tRNA; it reads KDQ. Cysteine 197 functions as the Cysteine persulfide intermediate in the catalytic mechanism.

Belongs to the MnmA/TRMU family.

The protein localises to the cytoplasm. It catalyses the reaction S-sulfanyl-L-cysteinyl-[protein] + uridine(34) in tRNA + AH2 + ATP = 2-thiouridine(34) in tRNA + L-cysteinyl-[protein] + A + AMP + diphosphate + H(+). Catalyzes the 2-thiolation of uridine at the wobble position (U34) of tRNA, leading to the formation of s(2)U34. This chain is tRNA-specific 2-thiouridylase MnmA, found in Saccharopolyspora erythraea (strain ATCC 11635 / DSM 40517 / JCM 4748 / NBRC 13426 / NCIMB 8594 / NRRL 2338).